A 122-amino-acid chain; its full sequence is Large ribosomal subunit protein uL14 (122 aa).

Belongs to the universal ribosomal protein uL14 family. Part of the 50S ribosomal subunit. Forms a cluster with proteins L3 and L19. In the 70S ribosome, L14 and L19 interact and together make contacts with the 16S rRNA in bridges B5 and B8.

Functionally, binds to 23S rRNA. Forms part of two intersubunit bridges in the 70S ribosome. This chain is Large ribosomal subunit protein uL14, found in Teredinibacter turnerae (strain ATCC 39867 / T7901).